The following is a 306-amino-acid chain: Tissue factor pathway inhibitor (306 aa).

The first 28 residues, Met-1 to Ala-28, serve as a signal peptide directing secretion. 3 BPTI/Kunitz inhibitor domains span residues Cys-50–Cys-100, Cys-121–Cys-171, and Cys-225–Cys-275. Intrachain disulfides connect Cys-50–Cys-100, Cys-59–Cys-83, Cys-75–Cys-96, Cys-121–Cys-171, Cys-130–Cys-154, Cys-146–Cys-167, Cys-225–Cys-275, Cys-234–Cys-258, and Cys-250–Cys-271. N-linked (GlcNAc...) asparagine glycosylation is present at Asn-141. Asn-254, Asn-264, and Asn-282 each carry an N-linked (GlcNAc...) asparagine glycan.

Isoform alpha is expressed in heart and spleen; isoform beta in heart and lung.

The protein localises to the secreted. Functionally, inhibits factor X (X(a)) directly and, in a Xa-dependent way, inhibits VIIa/tissue factor activity, presumably by forming a quaternary Xa/LACI/VIIa/TF complex. It possesses an antithrombotic action and also the ability to associate with lipoproteins in plasma. This is Tissue factor pathway inhibitor (Tfpi) from Mus musculus (Mouse).